We begin with the raw amino-acid sequence, 594 residues long: Solute carrier family 22 member 14 (594 aa).

The Cytoplasmic segment spans residues 1-70; sequence MAGEENFKEE…EFGTFQQRLV (70 aa). Residues 71–91 traverse the membrane as a helical segment; the sequence is ALTFIPSIMSAFFMFADHFVF. At 92–184 the chain is on the extracellular side; that stretch reads TAQKPYCNTS…LVCGMETKKD (93 aa). 4 N-linked (GlcNAc...) asparagine glycosylation sites follow: Asn-99, Asn-117, Asn-125, and Asn-150. A helical membrane pass occupies residues 185–205; that stretch reads TAQIMFMAGLPIGSLIFRLIT. At 206 to 210 the chain is on the cytoplasmic side; sequence DKMGR. The helical transmembrane segment at 211-231 threads the bilayer; that stretch reads YPAILLSLLGLIIFGFGTAFM. The Extracellular portion of the chain corresponds to 232–235; it reads NSFH. Residues 236 to 256 traverse the membrane as a helical segment; that stretch reads LYLFFRFGISQSVVGYAISSI. Residues 257-270 are Cytoplasmic-facing; it reads SLATEWLVGEHRAH. A helical membrane pass occupies residues 271 to 291; the sequence is AIILGHCFFAVGAVLLTGIAY. The Extracellular segment spans residues 292-297; that stretch reads SLPHWQ. Residues 298–318 form a helical membrane-spanning segment; sequence LLFLVGGILVIPFISYIWILP. Residues 319–379 are Cytoplasmic-facing; the sequence is ESPRWLMMKG…DFCKNRQLCK (61 aa). A helical transmembrane segment spans residues 380–400; sequence VTLVMSCVWFTVSYTYFTLSL. At 401-408 the chain is on the extracellular side; it reads RMRELGVS. The helical transmembrane segment at 409 to 431 threads the bilayer; sequence VHFRHVVPSIMEVPARLCCIFLL. At 432–437 the chain is on the cytoplasmic side; sequence QQIGRK. A helical membrane pass occupies residues 438–458; that stretch reads WSLAVTLLQAIIWCLLLLFLP. Over 459–488 the chain is Extracellular; the sequence is EGEDGLRLKWPRCPATELKSMTILVLMLRE. The chain crosses the membrane as a helical span at residues 489-509; the sequence is FSLAATVTVFFLYTAELLPTV. Residues 510–512 lie on the Cytoplasmic side of the membrane; the sequence is LRA. The helical transmembrane segment at 513–533 threads the bilayer; that stretch reads TGLGLVSLASVAGAILSLTII. The Extracellular segment spans residues 534 to 538; sequence SQTPS. A helical membrane pass occupies residues 539-559; that stretch reads LLPIFLCCVLAIVAFSLSSLL. The Cytoplasmic portion of the chain corresponds to 560–594; that stretch reads PETRDQPLSESLNHSSQIRNKVKDMKTKETSSDDV. Residues 566–594 are disordered; that stretch reads PLSESLNHSSQIRNKVKDMKTKETSSDDV. Residues 567–578 are compositionally biased toward polar residues; it reads LSESLNHSSQIR. The span at 580-594 shows a compositional bias: basic and acidic residues; it reads KVKDMKTKETSSDDV.

Belongs to the major facilitator (TC 2.A.1) superfamily. Organic cation transporter (TC 2.A.1.19) family. Ubiquitous.

Its subcellular location is the mitochondrion inner membrane. It is found in the cell projection. The protein resides in the cilium. It localises to the flagellum membrane. The catalysed reaction is riboflavin(in) = riboflavin(out). Its function is as follows. Riboflavin transporter localized at the inner mitochondrial membrane of the spermatozoa midpiece, which is required for male fertility. SLC22A14-mediated riboflavin transport is essential for spermatozoa energy generation and motility: riboflavin is the precursor of FMN and FAD, which are coenzymes of many enzymes in the TCA cycle (the citric acid cycle) in mitochondria. Required for sperm motility and normal sperm flagellar structure. This Homo sapiens (Human) protein is Solute carrier family 22 member 14.